A 406-amino-acid polypeptide reads, in one-letter code: Probable mannan endo-1,4-beta-mannosidase C (406 aa).

The first 20 residues, 1–20, serve as a signal peptide directing secretion; sequence MLINFEKVLSLALLAGSVSG. A glycan (N-linked (GlcNAc...) asparagine) is linked at asparagine 58. Tryptophan 80 lines the substrate pocket. N-linked (GlcNAc...) asparagine glycosylation is found at asparagine 86 and asparagine 114. Substrate is bound at residue asparagine 201. Residue glutamate 202 is the Proton donor of the active site. A substrate-binding site is contributed by tyrosine 287. The active-site Nucleophile is the glutamate 320. N-linked (GlcNAc...) asparagine glycosylation is present at asparagine 338. Substrate is bound at residue tryptophan 362.

Belongs to the glycosyl hydrolase 5 (cellulase A) family.

It is found in the secreted. It catalyses the reaction Random hydrolysis of (1-&gt;4)-beta-D-mannosidic linkages in mannans, galactomannans and glucomannans.. Functionally, endo-1,4-mannanase, a crucial enzyme for depolymerization of seed galactomannans and wood galactoglucomannans. In Aspergillus terreus (strain NIH 2624 / FGSC A1156), this protein is Probable mannan endo-1,4-beta-mannosidase C (manC).